The chain runs to 160 residues: Cyclic pyranopterin monophosphate synthase (160 aa).

Residues 77–79 (MCH) and 114–115 (ME) contribute to the substrate site. Asp129 is a catalytic residue.

Belongs to the MoaC family. In terms of assembly, homohexamer; trimer of dimers.

It carries out the reaction (8S)-3',8-cyclo-7,8-dihydroguanosine 5'-triphosphate = cyclic pyranopterin phosphate + diphosphate. It participates in cofactor biosynthesis; molybdopterin biosynthesis. Catalyzes the conversion of (8S)-3',8-cyclo-7,8-dihydroguanosine 5'-triphosphate to cyclic pyranopterin monophosphate (cPMP). The sequence is that of Cyclic pyranopterin monophosphate synthase from Listeria monocytogenes serotype 4b (strain F2365).